The sequence spans 362 residues: Innexin inx1 (362 aa).

The Cytoplasmic portion of the chain corresponds to 1–28 (MYKLLGSLKSYLKWQDIQTDNAVFRLHN). A helical membrane pass occupies residues 29–49 (SFTTVLLLTCSLIITATQYVG). The Extracellular segment spans residues 50-110 (QPISCIVNGV…DAKKYYTYYQ (61 aa)). Residues 111–131 (WVCFVLFFQAMACYTPKFLWN) traverse the membrane as a helical segment. Residues 132 to 177 (KFEGGLMRMIVMGLNITICTREEKEAKRDALLDYLIKHVKRHKLYA) lie on the Cytoplasmic side of the membrane. The helical transmembrane segment at 178 to 198 (IRYWACEFLCCINIIVQMYLM) threads the bilayer. The Extracellular segment spans residues 199–267 (NRFFDGEFLS…LPLNIVNEKT (69 aa)). Residues 268 to 288 (YVFIWFWFWILLVLLIGLIVF) form a helical membrane-spanning segment. The Cytoplasmic segment spans residues 289–362 (RGCIIFMPKF…VEPSKHDRAK (74 aa)).

This sequence belongs to the pannexin family. Heterooligomer of Inx2 and ogre. In ovary, expressed in follicle cells. Expressed around the periphery of the embryo during cellular blastoderm formation. Repeating epidermal pattern emerges from stage 11, high levels of expression detected along the borders of each segment from stage 13. At stage 13, expressed in the dorsal branch of the tracheal system. During stage 15, detected in a few cells at each of the branch points of the dorsal trunk and at low levels in cardioblasts. In embryos, also expressed in the salivary gland and the hindgut (at protein level). At stage 17, expressed in the dorsal side of the CNS. Expressed in the imaginal wing disk. Expressed in larval CNS and in tissues outside of the CNS. In pupae, expressed in the CNS and in primary, secondary and tertiary pigment cells of the retina.

Its subcellular location is the cell membrane. The protein resides in the cell junction. It localises to the gap junction. It is found in the basolateral cell membrane. Structural component of the gap junctions. Essential for generation and/or maintenance of postembryonic neuroblasts and normal development of optic lobe. The protein is Innexin inx1 (ogre) of Drosophila melanogaster (Fruit fly).